An 89-amino-acid chain; its full sequence is Small ribosomal subunit protein uS15 (89 aa).

It belongs to the universal ribosomal protein uS15 family. As to quaternary structure, part of the 30S ribosomal subunit. Forms a bridge to the 50S subunit in the 70S ribosome, contacting the 23S rRNA.

Its function is as follows. One of the primary rRNA binding proteins, it binds directly to 16S rRNA where it helps nucleate assembly of the platform of the 30S subunit by binding and bridging several RNA helices of the 16S rRNA. In terms of biological role, forms an intersubunit bridge (bridge B4) with the 23S rRNA of the 50S subunit in the ribosome. This Salinispora tropica (strain ATCC BAA-916 / DSM 44818 / JCM 13857 / NBRC 105044 / CNB-440) protein is Small ribosomal subunit protein uS15.